A 100-amino-acid chain; its full sequence is Large ribosomal subunit protein bL27 (100 aa).

The propeptide occupies 1–9 (MLVMNLQLF).

The protein belongs to the bacterial ribosomal protein bL27 family. Post-translationally, the N-terminus is cleaved by ribosomal processing cysteine protease Prp.

The polypeptide is Large ribosomal subunit protein bL27 (Clostridium botulinum (strain 657 / Type Ba4)).